The primary structure comprises 252 residues: DNA repair protein RecO (252 aa).

This sequence belongs to the RecO family.

In terms of biological role, involved in DNA repair and RecF pathway recombination. The sequence is that of DNA repair protein RecO from Rhodospirillum rubrum (strain ATCC 11170 / ATH 1.1.1 / DSM 467 / LMG 4362 / NCIMB 8255 / S1).